The primary structure comprises 259 residues: Global transcriptional regulator CodY (259 aa).

Residues 1–155 (MNLLQKTRKI…GATVVGMEIL (155 aa)) form a GAF domain region. A DNA-binding region (H-T-H motif) is located at residues 203–222 (ASKIADRVGITRSVIVNALR). S215 bears the Phosphoserine mark.

This sequence belongs to the CodY family.

It localises to the cytoplasm. DNA-binding global transcriptional regulator which is involved in the adaptive response to starvation and acts by directly or indirectly controlling the expression of numerous genes in response to nutrient availability. During rapid exponential growth, CodY is highly active and represses genes whose products allow adaptation to nutrient depletion. The polypeptide is Global transcriptional regulator CodY (Geobacillus sp. (strain WCH70)).